The primary structure comprises 1207 residues: DNA-directed RNA polymerase subunit beta' (1207 aa).

Zn(2+) is bound by residues C60, C62, C75, and C78. 3 residues coordinate Mg(2+): D450, D452, and D454. 4 residues coordinate Zn(2+): C818, C892, C899, and C902.

This sequence belongs to the RNA polymerase beta' chain family. In terms of assembly, the RNAP catalytic core consists of 2 alpha, 1 beta, 1 beta' and 1 omega subunit. When a sigma factor is associated with the core the holoenzyme is formed, which can initiate transcription. The cofactor is Mg(2+). Zn(2+) is required as a cofactor.

It catalyses the reaction RNA(n) + a ribonucleoside 5'-triphosphate = RNA(n+1) + diphosphate. DNA-dependent RNA polymerase catalyzes the transcription of DNA into RNA using the four ribonucleoside triphosphates as substrates. The sequence is that of DNA-directed RNA polymerase subunit beta' from Lactococcus lactis subsp. cremoris (strain SK11).